The following is a 229-amino-acid chain: Enolase-phosphatase E1 (229 aa).

The span at 208–218 (DTQSTHRQVSS) shows a compositional bias: polar residues. Positions 208–229 (DTQSTHRQVSSFDDIHPEQIPT) are disordered. The span at 220 to 229 (DDIHPEQIPT) shows a compositional bias: basic and acidic residues.

The protein belongs to the HAD-like hydrolase superfamily. MasA/MtnC family. In terms of assembly, monomer. It depends on Mg(2+) as a cofactor.

It catalyses the reaction 5-methylsulfanyl-2,3-dioxopentyl phosphate + H2O = 1,2-dihydroxy-5-(methylsulfanyl)pent-1-en-3-one + phosphate. It functions in the pathway amino-acid biosynthesis; L-methionine biosynthesis via salvage pathway; L-methionine from S-methyl-5-thio-alpha-D-ribose 1-phosphate: step 3/6. Its pathway is amino-acid biosynthesis; L-methionine biosynthesis via salvage pathway; L-methionine from S-methyl-5-thio-alpha-D-ribose 1-phosphate: step 4/6. In terms of biological role, bifunctional enzyme that catalyzes the enolization of 2,3-diketo-5-methylthiopentyl-1-phosphate (DK-MTP-1-P) into the intermediate 2-hydroxy-3-keto-5-methylthiopentenyl-1-phosphate (HK-MTPenyl-1-P), which is then dephosphorylated to form the acireductone 1,2-dihydroxy-3-keto-5-methylthiopentene (DHK-MTPene). This chain is Enolase-phosphatase E1, found in Cronobacter sakazakii (Enterobacter sakazakii).